The following is a 79-amino-acid chain: Beta-defensin 15 (79 aa).

Positions Met1–Ala20 are cleaved as a signal peptide. Intrachain disulfides connect Cys26/Cys53, Cys33/Cys47, and Cys37/Cys54.

This sequence belongs to the beta-defensin family. In terms of tissue distribution, expressed in testis and to a lesser extent in epididymis (caput, corpus and cauda). Also weakly expressed in kidneys and colon.

The protein resides in the secreted. Its function is as follows. Has antibacterial activity. This Mus musculus (Mouse) protein is Beta-defensin 15 (Defb15).